The sequence spans 123 residues: UPF0102 protein PSEEN4497 (123 aa).

This sequence belongs to the UPF0102 family.

The polypeptide is UPF0102 protein PSEEN4497 (Pseudomonas entomophila (strain L48)).